A 252-amino-acid polypeptide reads, in one-letter code: DNA-(apurinic or apyrimidinic site) lyase Nei2 (252 aa).

Pro2 (schiff-base intermediate with DNA) is an active-site residue. Glu3 (proton donor) is an active-site residue. Lys51 acts as the Proton donor (in beta-elimination) in catalysis. The FPG-type zinc finger occupies 216-250 (WVYGRAGEPCRRCGTLIQTDRGGERVTYWCPVCQT). 4 residues coordinate Zn(2+): Cys225, Cys228, Cys245, and Cys248.

This sequence belongs to the FPG family. Monomer. It depends on Zn(2+) as a cofactor.

The enzyme catalyses 2'-deoxyribonucleotide-(2'-deoxyribose 5'-phosphate)-2'-deoxyribonucleotide-DNA = a 3'-end 2'-deoxyribonucleotide-(2,3-dehydro-2,3-deoxyribose 5'-phosphate)-DNA + a 5'-end 5'-phospho-2'-deoxyribonucleoside-DNA + H(+). Functionally, involved in base excision repair of DNA damaged by oxidation or by mutagenic agents. Acts as DNA glycosylase that recognizes and removes damaged bases. Its function is as follows. Involved in the repair of psoralen-UVA DNA cross-links. A lyase that cleaves single-stranded (ss)DNA but not double-stranded (ds)DNA with an abasic site. Has 5-hydroxyuracil (5-OH-U) glycosylase activity on ssDNA with 5-OH-U, with 10-fold less activity on dsDNA, but weak to no uracil glycosylase activity. Has weak glycosylase activity on thymine glycol and dihydrothymine residues in ssDNA. Cleaves the DNA backbone by beta-delta elimination to generate a single-strand break at the site of the removed base with both 3'- and 5'-phosphates. This chain is DNA-(apurinic or apyrimidinic site) lyase Nei2, found in Mycolicibacterium smegmatis (strain ATCC 700084 / mc(2)155) (Mycobacterium smegmatis).